Reading from the N-terminus, the 683-residue chain is Cytoskeleton-associated protein 2 (683 aa).

Disordered stretches follow at residues 1–28 (MSTP…QRRQ) and 153–175 (NSKK…KKPV). A phosphoserine mark is found at S178 and S190. 2 disordered regions span residues 214-236 (KATK…SSNM) and 336-403 (EKSE…EKPV). Residues 219 to 236 (QPVNTSSVTVKSNRSSNM) are compositionally biased toward polar residues. 2 stretches are compositionally biased toward basic and acidic residues: residues 336 to 345 (EKSEPVDQRR) and 362 to 376 (ETSE…EWKA). Phosphoserine is present on S534. T579 and T582 each carry phosphothreonine. S595 carries the phosphoserine modification. Phosphothreonine occurs at positions 596 and 597. Phosphotyrosine is present on Y599. Position 602 is a phosphoserine (S602).

This sequence belongs to the CKAP2 family. In terms of assembly, associates with alpha- and beta-tubulins. In terms of tissue distribution, abundant in testis, thymus, and in tumor derived cell lines, while barely detectable in liver, prostate, and kidney.

The protein localises to the cytoplasm. It localises to the cytoskeleton. Its subcellular location is the spindle. The protein resides in the spindle pole. In terms of biological role, possesses microtubule stabilizing properties. Involved in regulating aneuploidy, cell cycling, and cell death in a p53/TP53-dependent manner. In Homo sapiens (Human), this protein is Cytoskeleton-associated protein 2.